The primary structure comprises 100 residues: MAKKSMIERESKRAALVAKYATRRQALKAAIQKTKSFDERLVLQHQLQDLPVNSVPCRLHNRCTITGRPKGYYRDFGLSRHELRAMAHGCLLPGVTKASW.

The protein belongs to the universal ribosomal protein uS14 family. As to quaternary structure, part of the 30S ribosomal subunit.

It localises to the plastid. The protein localises to the chloroplast. Its function is as follows. Binds 16S rRNA, required for the assembly of 30S particles. The sequence is that of Small ribosomal subunit protein uS14c from Nephroselmis olivacea (Green alga).